Reading from the N-terminus, the 266-residue chain is BTB/POZ domain-containing protein KCTD2 (266 aa).

A2 bears the N-acetylalanine mark. Residues 38–79 (GRHPADTAASPPPPRTAGARARTSGADGRRRGRPLGPAQRGR) form a disordered region. Over residues 53–63 (TAGARARTSGA) the composition is skewed to low complexity. Residues 76 to 174 (QRGRYLLRDT…LVKERIRDNE (99 aa)) enclose the BTB domain.

This is BTB/POZ domain-containing protein KCTD2 (Kctd2) from Mus musculus (Mouse).